The chain runs to 274 residues: MAIHLYKTSTPSTRNGAVDSQVKSNPRNNLICGQHHCGKGRNARGIITARHRGGGHKRLYRKIDFRRNAKDIYGRIVTIEYDPNRNAYICLIHYGDGEKRYILHPRGAIIGDTIVSGTEVPIKMGNALPLTDMPLGTAIHNIEITLGKGGQLARAAGAVAKLIAKEGKSATLKLPSGEVRLISKNCSATVGQVGNVGVNQKSLGRAGSKRWLGKRPVVRGVVMNPVDHPHGGGEGRAPIGRKKPVTPWGYPALGRRTRKRKKYSETLILRRRSK.

2 disordered regions span residues 1 to 21 (MAIH…VDSQ) and 224 to 252 (NPVD…GYPA).

It belongs to the universal ribosomal protein uL2 family. Part of the 50S ribosomal subunit.

Its subcellular location is the plastid. The protein localises to the chloroplast. The sequence is that of Large ribosomal subunit protein uL2cz/uL2cy (rpl2-A) from Olimarabidopsis pumila (Dwarf rocket).